Consider the following 152-residue polypeptide: Small ribosomal subunit protein uS15 (152 aa).

The segment covering 1–19 (MAKMHTRRKGRSRSTRPVR) has biased composition (basic residues). The tract at residues 1-21 (MAKMHTRRKGRSRSTRPVRKT) is disordered.

This sequence belongs to the universal ribosomal protein uS15 family. As to quaternary structure, part of the 30S ribosomal subunit.

The sequence is that of Small ribosomal subunit protein uS15 from Methanocella arvoryzae (strain DSM 22066 / NBRC 105507 / MRE50).